We begin with the raw amino-acid sequence, 450 residues long: MGRKYFGTDGVRGRVGDSTITPEFVMRLGYAAGVTLVGREQLPPGERPAILIGKDTRISGYMLEAALEAGFAAAGVDVMLAGPVPTPAVAYLTRALRLQAGVVISASHNPYDDNGIKFFSANGTKLPDALEEEIEFRVDQPMVCAEASRLGKARRIVDAAGRYVEFCKSAFPNEFDLRGYRIVLDCAHGAAYHIGPSVFHELGAEVIPLGVEPNGLNINDQVGATHPQTLRSAVLANKADFGIALDGDGDRVVMVDGDGELYDGDKLLYVIAASRQAEGRLEGVVGTLMSNLGLERAIGRLGLAFARAKVGDRYVLETMHERGWRLGGENSGHIICLDRHTTGDGIVSALQVIAALIKGQCTLATACADLVFYPQKLINVPLAAGFDWRSDERIDQARSDAELELGEQGRVLLRPSGTEPLLRVMVEGKDGSQVERLARHIADCVRHASV.

Serine 107 acts as the Phosphoserine intermediate in catalysis. Residues serine 107, aspartate 246, aspartate 248, and aspartate 250 each contribute to the Mg(2+) site. Serine 107 carries the phosphoserine modification.

It belongs to the phosphohexose mutase family. Requires Mg(2+) as cofactor. Post-translationally, activated by phosphorylation.

It catalyses the reaction alpha-D-glucosamine 1-phosphate = D-glucosamine 6-phosphate. In terms of biological role, catalyzes the conversion of glucosamine-6-phosphate to glucosamine-1-phosphate. This chain is Phosphoglucosamine mutase, found in Aromatoleum aromaticum (strain DSM 19018 / LMG 30748 / EbN1) (Azoarcus sp. (strain EbN1)).